The following is a 135-amino-acid chain: UPF0216 protein MTH_949 (135 aa).

This sequence belongs to the UPF0216 family.

The sequence is that of UPF0216 protein MTH_949 from Methanothermobacter thermautotrophicus (strain ATCC 29096 / DSM 1053 / JCM 10044 / NBRC 100330 / Delta H) (Methanobacterium thermoautotrophicum).